Consider the following 336-residue polypeptide: GTPase Obg (336 aa).

The Obg domain maps to 1–159; that stretch reads MKFVDEATLI…KTLKLELKLL (159 aa). Residues 160–329 enclose the OBG-type G domain; that stretch reads ADVGLVGLPN…LIEAIFAQLR (170 aa). GTP is bound by residues 166 to 173, 191 to 195, 213 to 216, 283 to 286, and 310 to 312; these read GLPNAGKS, FTTLA, DIPG, NKMD, and SAI. Residues Ser173 and Thr193 each coordinate Mg(2+).

The protein belongs to the TRAFAC class OBG-HflX-like GTPase superfamily. OBG GTPase family. In terms of assembly, monomer. The cofactor is Mg(2+).

The protein localises to the cytoplasm. An essential GTPase which binds GTP, GDP and possibly (p)ppGpp with moderate affinity, with high nucleotide exchange rates and a fairly low GTP hydrolysis rate. Plays a role in control of the cell cycle, stress response, ribosome biogenesis and in those bacteria that undergo differentiation, in morphogenesis control. The polypeptide is GTPase Obg (Desulfatibacillum aliphaticivorans).